The primary structure comprises 329 residues: Ribosomal protein L11 methyltransferase (329 aa).

S-adenosyl-L-methionine is bound by residues Thr177, Gly198, Asp220, and Asn264.

This sequence belongs to the methyltransferase superfamily. PrmA family.

The protein localises to the cytoplasm. It carries out the reaction L-lysyl-[protein] + 3 S-adenosyl-L-methionine = N(6),N(6),N(6)-trimethyl-L-lysyl-[protein] + 3 S-adenosyl-L-homocysteine + 3 H(+). Its function is as follows. Methylates ribosomal protein L11. This Helicobacter acinonychis (strain Sheeba) protein is Ribosomal protein L11 methyltransferase.